The sequence spans 127 residues: Small ribosomal subunit protein bS16 (127 aa).

The disordered stretch occupies residues G80–V127. The segment covering L81–P90 has biased composition (basic residues). Basic and acidic residues predominate over residues H91–E101. The segment covering R102–A121 has biased composition (low complexity).

It belongs to the bacterial ribosomal protein bS16 family.

The polypeptide is Small ribosomal subunit protein bS16 (Bartonella henselae (strain ATCC 49882 / DSM 28221 / CCUG 30454 / Houston 1) (Rochalimaea henselae)).